An 877-amino-acid polypeptide reads, in one-letter code: Polycomb protein Scm (877 aa).

The interval 1 to 57 (MSGGRDSSTSSGSNSAAPGASTNATSSASASASSTSTSASPGSTTSPASTQRQRGRP) is disordered. Residues 7–50 (SSTSSGSNSAAPGASTNATSSASASASSTSTSASPGSTTSPAST) are compositionally biased toward low complexity. The segment at 54 to 93 (RGRPAKRATCTWCGEGKLPLQYVLPTQTGKKEFCSETCIA) adopts an FCS-type zinc-finger fold. Residues Cys63, Cys66, Cys87, and Cys91 each coordinate Zn(2+). 2 MBT repeats span residues 175 to 273 (FDWD…LQPP) and 281 to 382 (SSWP…MQPP). Disordered stretches follow at residues 535–621 (NSRK…SNKV), 652–692 (TNTN…GGSA), and 713–735 (ANVKPSNSYYKSPTTLSSSASLP). A Phosphothreonine modification is found at Thr546. Ser549 and Ser550 each carry phosphoserine. Polar residues predominate over residues 560–569 (QSNSATTSPS). Phosphoserine is present on Ser585. Low complexity predominate over residues 598-620 (ASQQNSNHSLNNNNNSASKSSNK). Residues 724–735 (SPTTLSSSASLP) show a composition bias toward low complexity. The SAM domain occupies 806–876 (WTIEEVIQYI…KVNGRRNNLA (71 aa)).

It belongs to the SCM family. In terms of assembly, scm associates with the PRC1 core complex containing PSC, PC, PH and Sce/RING1. Forms homotypic and heterotypic interactions. Interacts with the SAM domain of ph-p via its SAM domain in vitro. Interacts with corto in vitro.

Its subcellular location is the nucleus. Its function is as follows. Polycomb group (PcG) protein. PcG proteins act by forming multiprotein complexes, which are required to maintain the transcriptionally repressive state of homeotic genes throughout development. PcG proteins are not required to initiate repression, but to maintain it during later stages of development. They probably act via the methylation of histones, rendering chromatin heritably changed in its expressibility. The polypeptide is Polycomb protein Scm (Drosophila melanogaster (Fruit fly)).